The following is a 73-amino-acid chain: Translational regulator CsrA (73 aa).

The protein belongs to the CsrA/RsmA family. Homodimer; the beta-strands of each monomer intercalate to form a hydrophobic core, while the alpha-helices form wings that extend away from the core.

It is found in the cytoplasm. Functionally, a translational regulator that binds mRNA to regulate translation initiation and/or mRNA stability. Usually binds in the 5'-UTR at or near the Shine-Dalgarno sequence preventing ribosome-binding, thus repressing translation. Its main target seems to be the major flagellin gene, while its function is anatagonized by FliW. The protein is Translational regulator CsrA of Thermosipho africanus (strain TCF52B).